Reading from the N-terminus, the 149-residue chain is Golgi apparatus membrane protein tvp-18 (149 aa).

The N-linked (GlcNAc...) asparagine glycan is linked to Asn11. Transmembrane regions (helical) follow at residues 18–38 (WLGILSMILCFALGIANIFTF), 41–61 (IIIVFSVITLCFSFVILFVEV), 84–103 (NYTRAAAYGVMAVVVFLSCI), and 108–128 (SLLVPGIFLSFTGICYALAAL).

It belongs to the TVP18 family.

The protein resides in the golgi apparatus membrane. Golgi membrane protein involved in vesicular trafficking. This Neurospora crassa (strain ATCC 24698 / 74-OR23-1A / CBS 708.71 / DSM 1257 / FGSC 987) protein is Golgi apparatus membrane protein tvp-18 (tvp-18).